The following is a 218-amino-acid chain: Thiopurine S-methyltransferase (218 aa).

S-adenosyl-L-methionine contacts are provided by Trp10, Leu45, Glu66, and Arg123.

This sequence belongs to the class I-like SAM-binding methyltransferase superfamily. TPMT family.

The protein resides in the cytoplasm. The enzyme catalyses S-adenosyl-L-methionine + a thiopurine = S-adenosyl-L-homocysteine + a thiopurine S-methylether.. The sequence is that of Thiopurine S-methyltransferase from Shewanella baltica (strain OS195).